The primary structure comprises 280 residues: Putative S-adenosyl-L-methionine-dependent methyltransferase FRAAL3836 (280 aa).

S-adenosyl-L-methionine-binding positions include D121 and 150 to 151 (DL).

It belongs to the UPF0677 family.

In terms of biological role, exhibits S-adenosyl-L-methionine-dependent methyltransferase activity. In Frankia alni (strain DSM 45986 / CECT 9034 / ACN14a), this protein is Putative S-adenosyl-L-methionine-dependent methyltransferase FRAAL3836.